A 412-amino-acid chain; its full sequence is Multifunctional CCA protein (412 aa).

ATP contacts are provided by glycine 8 and arginine 11. Glycine 8 and arginine 11 together coordinate CTP. The Mg(2+) site is built by aspartate 21 and aspartate 23. Residues arginine 91, arginine 137, and arginine 140 each contribute to the ATP site. CTP is bound by residues arginine 91, arginine 137, and arginine 140. Positions 228-329 (TGIHTLMTLS…VKLFDSIDAW (102 aa)) constitute an HD domain.

The protein belongs to the tRNA nucleotidyltransferase/poly(A) polymerase family. Bacterial CCA-adding enzyme type 1 subfamily. As to quaternary structure, monomer. Can also form homodimers and oligomers. Mg(2+) serves as cofactor. It depends on Ni(2+) as a cofactor.

It catalyses the reaction a tRNA precursor + 2 CTP + ATP = a tRNA with a 3' CCA end + 3 diphosphate. It carries out the reaction a tRNA with a 3' CCA end + 2 CTP + ATP = a tRNA with a 3' CCACCA end + 3 diphosphate. Its function is as follows. Catalyzes the addition and repair of the essential 3'-terminal CCA sequence in tRNAs without using a nucleic acid template. Adds these three nucleotides in the order of C, C, and A to the tRNA nucleotide-73, using CTP and ATP as substrates and producing inorganic pyrophosphate. tRNA 3'-terminal CCA addition is required both for tRNA processing and repair. Also involved in tRNA surveillance by mediating tandem CCA addition to generate a CCACCA at the 3' terminus of unstable tRNAs. While stable tRNAs receive only 3'-terminal CCA, unstable tRNAs are marked with CCACCA and rapidly degraded. The protein is Multifunctional CCA protein of Shigella dysenteriae serotype 1 (strain Sd197).